We begin with the raw amino-acid sequence, 241 residues long: 2-C-methyl-D-erythritol 4-phosphate cytidylyltransferase (241 aa).

Belongs to the IspD/TarI cytidylyltransferase family. IspD subfamily. Homodimer.

It carries out the reaction 2-C-methyl-D-erythritol 4-phosphate + CTP + H(+) = 4-CDP-2-C-methyl-D-erythritol + diphosphate. Its pathway is isoprenoid biosynthesis; isopentenyl diphosphate biosynthesis via DXP pathway; isopentenyl diphosphate from 1-deoxy-D-xylulose 5-phosphate: step 2/6. Its function is as follows. Catalyzes the formation of 4-diphosphocytidyl-2-C-methyl-D-erythritol from CTP and 2-C-methyl-D-erythritol 4-phosphate (MEP). The polypeptide is 2-C-methyl-D-erythritol 4-phosphate cytidylyltransferase (Yersinia pseudotuberculosis serotype IB (strain PB1/+)).